Consider the following 95-residue polypeptide: uncharacterized protein (95 aa).

This is an uncharacterized protein from Escherichia coli (strain K12).